Reading from the N-terminus, the 253-residue chain is Probable transcriptional regulatory protein Hore_12350 (253 aa).

A disordered region spans residues 1–21 (MAGHSKWANIKHKKAKEDRKR).

It belongs to the TACO1 family.

It localises to the cytoplasm. The chain is Probable transcriptional regulatory protein Hore_12350 from Halothermothrix orenii (strain H 168 / OCM 544 / DSM 9562).